The primary structure comprises 479 residues: Glucan 1,3-beta-glucosidase 2 (479 aa).

An N-terminal signal peptide occupies residues M1–C21. N-linked (GlcNAc...) asparagine glycans are attached at residues N25, N29, N63, N104, N187, and N193. E227 acts as the Proton donor in catalysis. 3 N-linked (GlcNAc...) asparagine glycosylation sites follow: N254, N285, and N288. H306 functions as the Nucleophile in the catalytic mechanism. N-linked (GlcNAc...) asparagine glycosylation is found at N318 and N451. S456 carries the GPI-anchor amidated serine lipid modification. A propeptide spans S457–I479 (removed in mature form).

This sequence belongs to the glycosyl hydrolase 5 (cellulase A) family. Post-translationally, predicted to be a substrate for cleavage by KEX2.

The protein resides in the cell membrane. The protein localises to the secreted. It catalyses the reaction Successive hydrolysis of beta-D-glucose units from the non-reducing ends of (1-&gt;3)-beta-D-glucans, releasing alpha-glucose.. In terms of biological role, beta-glucanases participate in the metabolism of beta-glucan, the main structural component of the cell wall. EXG2 is not heavily involved in the exoglucanase function of the adhesion process. In Candida albicans (strain SC5314 / ATCC MYA-2876) (Yeast), this protein is Glucan 1,3-beta-glucosidase 2 (EXG2).